Here is a 350-residue protein sequence, read N- to C-terminus: Small ribosomal subunit biogenesis GTPase RsgA (350 aa).

Residues 1–30 are disordered; sequence MSKRKLTQNQQRRIQSNNAKTLHRHQHRHK. Over residues 7–20 the composition is skewed to polar residues; it reads TQNQQRRIQSNNAK. Basic residues predominate over residues 21–30; sequence TLHRHQHRHK. The 169-residue stretch at 106–274 folds into the CP-type G domain; it reads HNQIVRPDYY…LIDSPGIREF (169 aa). Residues 162–165 and 216–224 each bind GTP; these read NKAD and GQSGVGKSS. 4 residues coordinate Zn(2+): Cys298, Cys303, His305, and Cys311.

This sequence belongs to the TRAFAC class YlqF/YawG GTPase family. RsgA subfamily. In terms of assembly, monomer. Associates with 30S ribosomal subunit, binds 16S rRNA. Zn(2+) is required as a cofactor.

The protein localises to the cytoplasm. Functionally, one of several proteins that assist in the late maturation steps of the functional core of the 30S ribosomal subunit. Helps release RbfA from mature subunits. May play a role in the assembly of ribosomal proteins into the subunit. Circularly permuted GTPase that catalyzes slow GTP hydrolysis, GTPase activity is stimulated by the 30S ribosomal subunit. This Histophilus somni (strain 129Pt) (Haemophilus somnus) protein is Small ribosomal subunit biogenesis GTPase RsgA.